The sequence spans 258 residues: MLEAKFEEASLFKRIIDGFKDCVQLVNFQCKEDGIIAQAVDDSRVLLVSLEIGVEAFQEYRCDHPVTLGMDLTSLSKILRCGNNTDTLTLIADNTPDSIILLFEDTKKDRIAEYSLKLMDIDADFLKIEELQYDSTLSLPSSEFSKIVRDLSQLSDSINIMITKETIKFVADGDIGSGSVIIKPFVDMEHPETSIKLEMDQPVDLTFGAKYLLDIIKGSSLSDRVGIRLSSEAPALFQFDLKSGFLQFFLAPKFNDEE.

A DNA-binding region spans residues 61-80; sequence RCDHPVTLGMDLTSLSKILR. K127 is covalently cross-linked (Glycyl lysine isopeptide (Lys-Gly) (interchain with G-Cter in SUMO)). K164 participates in a covalent cross-link: Glycyl lysine isopeptide (Lys-Gly) (interchain with G-Cter in SUMO); alternate. K164 participates in a covalent cross-link: Glycyl lysine isopeptide (Lys-Gly) (interchain with G-Cter in ubiquitin); alternate.

The protein belongs to the PCNA family. As to quaternary structure, homotrimer. Interacts with RAD30. Interacts with MCM10. Interacts with UBP10. In terms of processing, sumoylated on Lys-164, and to a lesser extent on Lys-127 by the UBC9/SIZ1 complex during S-phase; which impairs ubiquitination and function in DNA repair. Post-translationally, monoubiquitinated on Lys-164 by the UBC2/RAD18 complex upon DNA damage, and then polyubiquitinated through 'Lys-63'-linkage by UBC13/MMS2. Ubiquitination is required for UBC2-mediated DNA repair. Lys-164 is deubiquitinated by UBP10.

The protein localises to the nucleus. This protein is an auxiliary protein of DNA polymerase delta and is involved in the control of eukaryotic DNA replication by increasing the polymerase's processibility during elongation of the leading strand. Involved in DNA repair. The chain is Proliferating cell nuclear antigen (POL30) from Saccharomyces cerevisiae (strain ATCC 204508 / S288c) (Baker's yeast).